A 497-amino-acid chain; its full sequence is Carboxylesterase (497 aa).

Residue S185 is the Acyl-ester intermediate of the active site. Catalysis depends on charge relay system residues E319 and H415.

The protein belongs to the type-B carboxylesterase/lipase family.

The protein resides in the secreted. It carries out the reaction a carboxylic ester + H2O = an alcohol + a carboxylate + H(+). This is Carboxylesterase from Thermobifida fusca (Thermomonospora fusca).